A 309-amino-acid chain; its full sequence is Putative ankyrin repeat protein R603 (309 aa).

ANK repeat units lie at residues 53–82 (QVNG…MNPE), 83–112 (NKSQ…DVSL), 114–144 (DHFA…DVTS), 145–176 (NNNL…DIHA), 177–206 (DEYF…DVNM), 214–243 (NVLS…DISF), and 245–274 (DDND…DISF).

The sequence is that of Putative ankyrin repeat protein R603 from Acanthamoeba polyphaga (Amoeba).